The chain runs to 356 residues: 1-deoxy-D-xylulose 5-phosphate reductoisomerase (356 aa).

The NADPH site is built by Thr7, Gly8, Ser9, Ile10, Gly31, Asn33, and Asn111. Lys112 serves as a coordination point for 1-deoxy-D-xylulose 5-phosphate. Residue Glu113 coordinates NADPH. Asp131 lines the Mn(2+) pocket. 1-deoxy-D-xylulose 5-phosphate-binding residues include Ser132, Glu133, Ser155, and His178. Glu133 contacts Mn(2+). Gly184 is an NADPH binding site. 1-deoxy-D-xylulose 5-phosphate contacts are provided by Ser191, Asn196, Lys197, and Glu200. Glu200 is a Mn(2+) binding site.

It belongs to the DXR family. It depends on Mg(2+) as a cofactor. The cofactor is Mn(2+).

The catalysed reaction is 2-C-methyl-D-erythritol 4-phosphate + NADP(+) = 1-deoxy-D-xylulose 5-phosphate + NADPH + H(+). It participates in isoprenoid biosynthesis; isopentenyl diphosphate biosynthesis via DXP pathway; isopentenyl diphosphate from 1-deoxy-D-xylulose 5-phosphate: step 1/6. Functionally, catalyzes the NADPH-dependent rearrangement and reduction of 1-deoxy-D-xylulose-5-phosphate (DXP) to 2-C-methyl-D-erythritol 4-phosphate (MEP). This chain is 1-deoxy-D-xylulose 5-phosphate reductoisomerase, found in Campylobacter jejuni subsp. doylei (strain ATCC BAA-1458 / RM4099 / 269.97).